A 478-amino-acid chain; its full sequence is MTLSFITRWRDELPETYTALSPTPLNNARLIWHNTELANTLSIPSSLFKNGAGVWGGENLLPGMSPLAQVYSGHQFGVWAGQLGDGRGILLGEQLLADGTTMDWHLKGAGLTPYSRMGDGRAVLRSTIRESLASEAMHYLGIPTTRALSIVTSDSPVYRETVESGAMLMRVAPSHLRFGHFEHFYYRREPEKVRQLADFAIRHYWSHLDDEEDKYRLWFTDVVARTASLIAQWQTVGFAHGVMNTDNMSLLGLTLDYGPFGFLDDYEPGFICNHSDHQGRYSFDNQPAVALWNLQRLAQTLSPFVAVDALNEALDSYQQVLLTHYGQRMRQKLGFMTEQKEDNALLNELFSLMARERSDYTRTFRMLSLTEQHSAASPLRDEFIDRAAFDDWFARYRVRLQQDEVTDSERQQLMQSVNPALVLRNWLAQRAIEAAEKGDMTELHRLHEALRNPFSDRDDDYVSRPPDWGKRLEVSCSS.

Residues Gly-84, Gly-86, Arg-87, Lys-107, Asp-119, Gly-120, Arg-170, and Arg-177 each contribute to the ATP site. The active-site Proton acceptor is Asp-246. Positions 247 and 256 each coordinate Mg(2+). Asp-256 is an ATP binding site.

The protein belongs to the SELO family. Mg(2+) serves as cofactor. The cofactor is Mn(2+).

The enzyme catalyses L-seryl-[protein] + ATP = 3-O-(5'-adenylyl)-L-seryl-[protein] + diphosphate. It carries out the reaction L-threonyl-[protein] + ATP = 3-O-(5'-adenylyl)-L-threonyl-[protein] + diphosphate. It catalyses the reaction L-tyrosyl-[protein] + ATP = O-(5'-adenylyl)-L-tyrosyl-[protein] + diphosphate. The catalysed reaction is L-histidyl-[protein] + UTP = N(tele)-(5'-uridylyl)-L-histidyl-[protein] + diphosphate. The enzyme catalyses L-seryl-[protein] + UTP = O-(5'-uridylyl)-L-seryl-[protein] + diphosphate. It carries out the reaction L-tyrosyl-[protein] + UTP = O-(5'-uridylyl)-L-tyrosyl-[protein] + diphosphate. Functionally, nucleotidyltransferase involved in the post-translational modification of proteins. It can catalyze the addition of adenosine monophosphate (AMP) or uridine monophosphate (UMP) to a protein, resulting in modifications known as AMPylation and UMPylation. This Escherichia coli O127:H6 (strain E2348/69 / EPEC) protein is Protein nucleotidyltransferase YdiU.